The primary structure comprises 130 residues: MAQVQYYGTGRRKHSVARVRLVPGEGRIVINKREMDTYFGLETLKLIVKQPLVLTETLGRYDVLVNVNGGGTTGQAGAIRHGVARALLKADPELRGALKRAGFLTRDPRMKERKKYGLKAARRAPQFSKR.

This sequence belongs to the universal ribosomal protein uS9 family.

The protein is Small ribosomal subunit protein uS9 of Brevibacillus brevis (strain 47 / JCM 6285 / NBRC 100599).